The primary structure comprises 189 residues: Ribose 1,5-bisphosphate phosphokinase PhnN (189 aa).

10-17 serves as a coordination point for ATP; that stretch reads GPSGSGKD.

The protein belongs to the ribose 1,5-bisphosphokinase family.

The enzyme catalyses alpha-D-ribose 1,5-bisphosphate + ATP = 5-phospho-alpha-D-ribose 1-diphosphate + ADP. It functions in the pathway metabolic intermediate biosynthesis; 5-phospho-alpha-D-ribose 1-diphosphate biosynthesis; 5-phospho-alpha-D-ribose 1-diphosphate from D-ribose 5-phosphate (route II): step 3/3. Catalyzes the phosphorylation of ribose 1,5-bisphosphate to 5-phospho-D-ribosyl alpha-1-diphosphate (PRPP). The chain is Ribose 1,5-bisphosphate phosphokinase PhnN from Enterobacter lignolyticus (strain SCF1).